The chain runs to 283 residues: Pantothenate synthetase (283 aa).

Residue 30–37 coordinates ATP; it reads MGNLHNGH. His37 serves as the catalytic Proton donor. Position 61 (Gln61) interacts with (R)-pantoate. Gln61 provides a ligand contact to beta-alanine. 149-152 provides a ligand contact to ATP; it reads GEKD. Gln155 serves as a coordination point for (R)-pantoate. 186 to 189 provides a ligand contact to ATP; it reads LSSR.

The protein belongs to the pantothenate synthetase family. Homodimer.

It localises to the cytoplasm. The catalysed reaction is (R)-pantoate + beta-alanine + ATP = (R)-pantothenate + AMP + diphosphate + H(+). It functions in the pathway cofactor biosynthesis; (R)-pantothenate biosynthesis; (R)-pantothenate from (R)-pantoate and beta-alanine: step 1/1. Its function is as follows. Catalyzes the condensation of pantoate with beta-alanine in an ATP-dependent reaction via a pantoyl-adenylate intermediate. The polypeptide is Pantothenate synthetase (Shigella flexneri serotype 5b (strain 8401)).